The chain runs to 251 residues: Flap endonuclease Xni (251 aa).

Asp-104 is a binding site for Mg(2+). In terms of domain architecture, 5'-3' exonuclease spans 160–249 (VQPQQLPDYW…IDGNLQQLRL (90 aa)). Residues Leu-171, Ala-172, Pro-180, Val-182, and Ile-185 each coordinate K(+). An interaction with DNA region spans residues 184-189 (GIGPKS).

Belongs to the Xni family. Mg(2+) is required as a cofactor. K(+) serves as cofactor.

Functionally, has flap endonuclease activity. During DNA replication, flap endonucleases cleave the 5'-overhanging flap structure that is generated by displacement synthesis when DNA polymerase encounters the 5'-end of a downstream Okazaki fragment. The sequence is that of Flap endonuclease Xni from Escherichia coli O81 (strain ED1a).